A 195-amino-acid chain; its full sequence is MPKLGMQSIRRRQLIDATLEAINEVGMHDATIAQIARRAGVSTGIISHYFRDKNGLLEATMRDITSQLRDAVLNRLHALPQGSAELRLQAIVGGNFDETQVSSAAMKAWLAFWASSMHQPMLYRLQQVSSRRLLSNLVSEFRRELPRQQAQEAGYGLAALIDGLWLRAALSGKALDKPLAHSLTRHFITQHLPTD.

The region spanning 8–68 (SIRRRQLIDA…ATMRDITSQL (61 aa)) is the HTH tetR-type domain. The segment at residues 31-50 (TIAQIARRAGVSTGIISHYF) is a DNA-binding region (H-T-H motif).

Its pathway is amine and polyamine biosynthesis; betaine biosynthesis via choline pathway [regulation]. Repressor involved in the biosynthesis of the osmoprotectant glycine betaine. It represses transcription of the choline transporter BetT and the genes of BetAB involved in the synthesis of glycine betaine. This chain is HTH-type transcriptional regulator BetI, found in Escherichia coli (strain UTI89 / UPEC).